Here is a 270-residue protein sequence, read N- to C-terminus: DNA adenine methylase (270 aa).

Positions 10, 14, 54, and 181 each coordinate S-adenosyl-L-methionine.

It belongs to the N(4)/N(6)-methyltransferase family.

The catalysed reaction is a 2'-deoxyadenosine in DNA + S-adenosyl-L-methionine = an N(6)-methyl-2'-deoxyadenosine in DNA + S-adenosyl-L-homocysteine + H(+). An alpha subtype methylase, recognizes the double-stranded sequence 5'-GATC-3' and methylates A-2. Overexpression leads to hypermutability. May be involved in methyl-directed DNA mismatch repair, initiation of chromosome replication and gene expression. This is DNA adenine methylase from Serratia marcescens.